We begin with the raw amino-acid sequence, 115 residues long: Superoxide reductase (115 aa).

Fe cation is bound by residues Glu-14, His-16, His-41, His-47, Cys-102, and His-105.

Belongs to the desulfoferrodoxin family. In terms of assembly, homotetramer. Fe cation is required as a cofactor.

It carries out the reaction reduced [rubredoxin] + superoxide + 2 H(+) = oxidized [rubredoxin] + H2O2. Uses electrons from reduced NADP, by way of rubredoxin and an oxidoreductase, to catalyze the reduction of superoxide to hydrogen peroxide. The protein is Superoxide reductase (sorA) of Thermococcus kodakarensis (strain ATCC BAA-918 / JCM 12380 / KOD1) (Pyrococcus kodakaraensis (strain KOD1)).